The following is a 73-amino-acid chain: MARKKESYESLMIKLQDIIEEMESEEISLEGSMKNYEEGIKLCNKMYKVLNEAEAKIKILDGNEEKEFVGNDN.

This sequence belongs to the XseB family. In terms of assembly, heterooligomer composed of large and small subunits.

Its subcellular location is the cytoplasm. It catalyses the reaction Exonucleolytic cleavage in either 5'- to 3'- or 3'- to 5'-direction to yield nucleoside 5'-phosphates.. Bidirectionally degrades single-stranded DNA into large acid-insoluble oligonucleotides, which are then degraded further into small acid-soluble oligonucleotides. In Clostridium novyi (strain NT), this protein is Exodeoxyribonuclease 7 small subunit.